The chain runs to 163 residues: Probable ribosome biogenesis protein RLP24 (163 aa).

It belongs to the eukaryotic ribosomal protein eL24 family. As to quaternary structure, associated with nucleolar and cytoplasmic pre-60S particles. At the end of biogenesis it dissociates from cytoplasmic pre-60S particles and is likely to be exchanged for its ribosomal homolog, RPL24.

Its subcellular location is the nucleus. It is found in the nucleolus. Involved in the biogenesis of the 60S ribosomal subunit. Ensures the docking of GTPBP4/NOG1 to pre-60S particles. The chain is Probable ribosome biogenesis protein RLP24 (Rsl24d1) from Rattus norvegicus (Rat).